The chain runs to 189 residues: UPF0312 protein VV2_0231 (189 aa).

Residues 1–22 (MRKSVIATGLALMMAVPFAANA) form the signal peptide.

It belongs to the UPF0312 family. Type 1 subfamily.

It localises to the periplasm. In Vibrio vulnificus (strain CMCP6), this protein is UPF0312 protein VV2_0231.